We begin with the raw amino-acid sequence, 225 residues long: T4 protein (225 aa).

This sequence belongs to the poxviruses B9 family.

The chain is T4 protein from Rabbit fibroma virus (strain Kasza) (RFV).